The sequence spans 166 residues: Large ribosomal subunit protein uL10 (166 aa).

Belongs to the universal ribosomal protein uL10 family. As to quaternary structure, part of the ribosomal stalk of the 50S ribosomal subunit. The N-terminus interacts with L11 and the large rRNA to form the base of the stalk. The C-terminus forms an elongated spine to which L12 dimers bind in a sequential fashion forming a multimeric L10(L12)X complex.

Functionally, forms part of the ribosomal stalk, playing a central role in the interaction of the ribosome with GTP-bound translation factors. The protein is Large ribosomal subunit protein uL10 of Hydrogenovibrio crunogenus (strain DSM 25203 / XCL-2) (Thiomicrospira crunogena).